Here is a 130-residue protein sequence, read N- to C-terminus: Holo-[acyl-carrier-protein] synthase (130 aa).

Positions 8 and 62 each coordinate Mg(2+).

It belongs to the P-Pant transferase superfamily. AcpS family. The cofactor is Mg(2+).

The protein resides in the cytoplasm. It catalyses the reaction apo-[ACP] + CoA = holo-[ACP] + adenosine 3',5'-bisphosphate + H(+). Functionally, transfers the 4'-phosphopantetheine moiety from coenzyme A to a Ser of acyl-carrier-protein. The sequence is that of Holo-[acyl-carrier-protein] synthase from Acidovorax ebreus (strain TPSY) (Diaphorobacter sp. (strain TPSY)).